Here is a 179-residue protein sequence, read N- to C-terminus: Adenine phosphoribosyltransferase (179 aa).

Belongs to the purine/pyrimidine phosphoribosyltransferase family. In terms of assembly, homodimer.

The protein resides in the cytoplasm. The enzyme catalyses AMP + diphosphate = 5-phospho-alpha-D-ribose 1-diphosphate + adenine. The protein operates within purine metabolism; AMP biosynthesis via salvage pathway; AMP from adenine: step 1/1. Its function is as follows. Catalyzes a salvage reaction resulting in the formation of AMP, that is energically less costly than de novo synthesis. The chain is Adenine phosphoribosyltransferase from Jannaschia sp. (strain CCS1).